A 182-amino-acid chain; its full sequence is UPF0200 protein Mboo_1593 (182 aa).

8–15 (GLPASGKG) contacts ATP.

The protein belongs to the UPF0200 family.

The sequence is that of UPF0200 protein Mboo_1593 from Methanoregula boonei (strain DSM 21154 / JCM 14090 / 6A8).